A 130-amino-acid chain; its full sequence is Immunoglobulin kappa chain variable 9-120 (130 aa).

Positions 1–22 (MDMRAPAQIFGFLLLLFQGTRC) are cleaved as a signal peptide. The tract at residues 23–45 (DIQMTQSPSSLSASLGERVSLTC) is framework-1. A disulfide bridge connects residues Cys-45 and Cys-110. The complementarity-determining-1 stretch occupies residues 46–56 (RASQDIGSSLN). The framework-2 stretch occupies residues 57–71 (WLQQEPDGTIKRLIY). Residues 72-78 (ATSSLDS) are complementarity-determining-2. Residues 79 to 110 (GVPKRFSGSRSGSDYSLTISSLESEDFVDYYC) are framework-3. The interval 111–119 (LQYASSPWT) is complementarity-determining-3. The segment at 120-129 (FGGGTKLEIK) is framework-4.

In Mus musculus (Mouse), this protein is Immunoglobulin kappa chain variable 9-120.